The sequence spans 435 residues: Actin-like protein 7A (435 aa).

A disordered region spans residues 1-64 (MWAPPAAIMG…TESKAAKERP (64 aa)). Positions 20-31 (QAPLQTQALQTA) are enriched in low complexity. The interval 31–51 (ASLRDGPAKRAVWVRHTSSEP) is required for interaction with TES. Residues 55 to 64 (TESKAAKERP) show a composition bias toward basic and acidic residues.

It belongs to the actin family. As to quaternary structure, interacts (via N-terminus) with TES (via LIM domain 2). Heterodimer with TES; the heterodimer interacts with ENAH to form a heterotrimer. Interacts with ACTL9. Interacts with CYLC1; the interaction may be relevant for proper acrosome attachment to the nuclear envelope. As to expression, strongly expressed in testis. Also expressed in other tissues.

The protein resides in the cytoplasm. It is found in the cytoskeleton. The protein localises to the golgi apparatus. Its subcellular location is the nucleus. It localises to the cytoplasmic vesicle. The protein resides in the secretory vesicle. It is found in the acrosome. Essential for normal spermatogenesis and male fertility. Required for normal sperm head morphology, acroplaxome formation, acrosome attachment, and acrosome granule stability. May anchor and stabilize acrosomal adherence to the acroplaxome at least in part by facilitating the presence of F-actin in the subacrosomal space. May play an important role in formation and fusion of Golgi-derived vesicles during acrosome biogenesis. In Homo sapiens (Human), this protein is Actin-like protein 7A (ACTL7A).